Consider the following 197-residue polypeptide: NADH-quinone oxidoreductase subunit C (197 aa).

Belongs to the complex I 30 kDa subunit family. In terms of assembly, NDH-1 is composed of 14 different subunits. Subunits NuoB, C, D, E, F, and G constitute the peripheral sector of the complex.

Its subcellular location is the cell inner membrane. The catalysed reaction is a quinone + NADH + 5 H(+)(in) = a quinol + NAD(+) + 4 H(+)(out). NDH-1 shuttles electrons from NADH, via FMN and iron-sulfur (Fe-S) centers, to quinones in the respiratory chain. The immediate electron acceptor for the enzyme in this species is believed to be ubiquinone. Couples the redox reaction to proton translocation (for every two electrons transferred, four hydrogen ions are translocated across the cytoplasmic membrane), and thus conserves the redox energy in a proton gradient. The sequence is that of NADH-quinone oxidoreductase subunit C from Caulobacter vibrioides (strain ATCC 19089 / CIP 103742 / CB 15) (Caulobacter crescentus).